Here is a 148-residue protein sequence, read N- to C-terminus: Ribosome maturation factor RimP (148 aa).

This sequence belongs to the RimP family.

It is found in the cytoplasm. Its function is as follows. Required for maturation of 30S ribosomal subunits. The chain is Ribosome maturation factor RimP from Treponema denticola (strain ATCC 35405 / DSM 14222 / CIP 103919 / JCM 8153 / KCTC 15104).